Here is a 388-residue protein sequence, read N- to C-terminus: L-lactate dehydrogenase (388 aa).

The 380-residue stretch at 1 to 380 (MIISAASDYR…SADALSRVTR (380 aa)) folds into the FMN hydroxy acid dehydrogenase domain. Tyrosine 24 contributes to the substrate binding site. Serine 106 and glutamine 127 together coordinate FMN. A substrate-binding site is contributed by tyrosine 129. Threonine 155 is an FMN binding site. Arginine 164 lines the substrate pocket. Lysine 251 provides a ligand contact to FMN. Histidine 275 serves as the catalytic Proton acceptor. Arginine 278 contacts substrate. Position 306 to 330 (306 to 330 (DSGIRSGLDVVRMLALGADAVLLGR)) interacts with FMN.

The protein belongs to the FMN-dependent alpha-hydroxy acid dehydrogenase family. It depends on FMN as a cofactor.

It localises to the cell inner membrane. It catalyses the reaction (S)-lactate + A = pyruvate + AH2. In terms of biological role, catalyzes the conversion of L-lactate to pyruvate. Is coupled to the respiratory chain. The polypeptide is L-lactate dehydrogenase (Xanthomonas axonopodis pv. citri (strain 306)).